An 87-amino-acid polypeptide reads, in one-letter code: UPF0367 protein P9211_01391 (87 aa).

It belongs to the UPF0367 family.

The sequence is that of UPF0367 protein P9211_01391 from Prochlorococcus marinus (strain MIT 9211).